We begin with the raw amino-acid sequence, 657 residues long: Replication restart protein PriA (657 aa).

The 167-residue stretch at 143–309 (ITASTGARSF…LRGAVRRLPL (167 aa)) folds into the Helicase ATP-binding domain. 156–163 (GVTGSGKT) contributes to the ATP binding site. A DEAH box motif is present at residues 252-255 (DEEH). Zn(2+) is bound by residues C366, C369, C375, C378, C393, C396, C406, and C409. The region spanning 390–570 (AMQCHYCGRQ…PFVRLIRFVF (181 aa)) is the Helicase C-terminal domain.

Belongs to the helicase family. PriA subfamily. As to quaternary structure, component of the replication restart primosome. Zn(2+) is required as a cofactor.

It catalyses the reaction Couples ATP hydrolysis with the unwinding of duplex DNA by translocating in the 3'-5' direction.. The catalysed reaction is ATP + H2O = ADP + phosphate + H(+). Functionally, initiates the restart of stalled replication forks, which reloads the replicative helicase on sites other than the origin of replication. Recognizes and binds to abandoned replication forks and remodels them to uncover a helicase loading site. Promotes assembly of the primosome at these replication forks. The polypeptide is Replication restart protein PriA (Treponema pallidum (strain Nichols)).